The following is a 90-amino-acid chain: Probable Fe(2+)-trafficking protein (90 aa).

The protein belongs to the Fe(2+)-trafficking protein family.

Its function is as follows. Could be a mediator in iron transactions between iron acquisition and iron-requiring processes, such as synthesis and/or repair of Fe-S clusters in biosynthetic enzymes. This chain is Probable Fe(2+)-trafficking protein, found in Marinobacter nauticus (strain ATCC 700491 / DSM 11845 / VT8) (Marinobacter aquaeolei).